Reading from the N-terminus, the 104-residue chain is Succinate dehydrogenase assembly factor 4, mitochondrial (104 aa).

The transit peptide at 1 to 30 (MVSTTLSVSRMTFVWRAARPSLLNHSLRKM) directs the protein to the mitochondrion. Residues 29-104 (KMSYQEGKPE…WERKGRCIDF (76 aa)) are disordered. 2 stretches are compositionally biased toward basic and acidic residues: residues 63–83 (EREPLQKFPDDVNPVTKEKGG) and 91–104 (RYGDWERKGRCIDF).

This sequence belongs to the SDHAF4 family. Interacts with Sdha in its FAD-bound form.

Its subcellular location is the mitochondrion matrix. In terms of biological role, plays an essential role in the assembly of succinate dehydrogenase (SDH), an enzyme complex (also referred to as respiratory complex II) that is a component of both the tricarboxylic acid (TCA) cycle and the mitochondrial electron transport chain, and which couples the oxidation of succinate to fumarate with the reduction of ubiquinone (coenzyme Q) to ubiquinol. Binds to the flavoprotein subunit Sdha in its FAD-bound form, blocking the generation of excess reactive oxygen species (ROS) and facilitating its assembly with the iron-sulfur protein subunit Sdhb into the SDH catalytic dimer. This is Succinate dehydrogenase assembly factor 4, mitochondrial from Mus musculus (Mouse).